The sequence spans 145 residues: 3-dehydroquinate dehydratase (145 aa).

Tyr23 serves as the catalytic Proton acceptor. The substrate site is built by Asn74, His80, and Asp87. His100 (proton donor) is an active-site residue. Substrate is bound by residues 101-102 and Arg111; that span reads IS.

The protein belongs to the type-II 3-dehydroquinase family. Homododecamer.

The catalysed reaction is 3-dehydroquinate = 3-dehydroshikimate + H2O. The protein operates within metabolic intermediate biosynthesis; chorismate biosynthesis; chorismate from D-erythrose 4-phosphate and phosphoenolpyruvate: step 3/7. Its function is as follows. Catalyzes a trans-dehydration via an enolate intermediate. The polypeptide is 3-dehydroquinate dehydratase (Dictyoglomus turgidum (strain DSM 6724 / Z-1310)).